Consider the following 61-residue polypeptide: Photosystem II reaction center protein K (61 aa).

The propeptide occupies 1–24 (MLNIFNLICICFNSALFSSTFLVA). Residues 40 to 60 (MPVIPLFFLLLAFVWQAAVSF) form a helical membrane-spanning segment.

The protein belongs to the PsbK family. PSII is composed of 1 copy each of membrane proteins PsbA, PsbB, PsbC, PsbD, PsbE, PsbF, PsbH, PsbI, PsbJ, PsbK, PsbL, PsbM, PsbT, PsbX, PsbY, PsbZ, Psb30/Ycf12, at least 3 peripheral proteins of the oxygen-evolving complex and a large number of cofactors. It forms dimeric complexes.

It localises to the plastid. It is found in the chloroplast thylakoid membrane. One of the components of the core complex of photosystem II (PSII). PSII is a light-driven water:plastoquinone oxidoreductase that uses light energy to abstract electrons from H(2)O, generating O(2) and a proton gradient subsequently used for ATP formation. It consists of a core antenna complex that captures photons, and an electron transfer chain that converts photonic excitation into a charge separation. The polypeptide is Photosystem II reaction center protein K (Sinapis alba (White mustard)).